Reading from the N-terminus, the 225-residue chain is Uracil-DNA glycosylase (225 aa).

Asp-65 functions as the Proton acceptor in the catalytic mechanism.

The protein belongs to the uracil-DNA glycosylase (UDG) superfamily. UNG family.

It is found in the cytoplasm. The catalysed reaction is Hydrolyzes single-stranded DNA or mismatched double-stranded DNA and polynucleotides, releasing free uracil.. Excises uracil residues from the DNA which can arise as a result of misincorporation of dUMP residues by DNA polymerase or due to deamination of cytosine. This Clostridium beijerinckii (strain ATCC 51743 / NCIMB 8052) (Clostridium acetobutylicum) protein is Uracil-DNA glycosylase.